The following is a 231-amino-acid chain: PIAGSMVLAAILLKLGGYGIIRMMQILPTTKTDMFLPFVVLALWGAILANLTCLQQTDLKSLIAYSSISHMGLVVAAIIIQTPWGLSGAMALMIAHGFTSSALFCLANTTYERTHTRILILTRGLHNILPMATTWWLLTNLMNIAVPPTMNFTGELLIMSALFNWCPTTIIMLGLSMLITASYSLHMFLSTQMGPTLLNNQTEPTHSREHLLMILHLIPLMMISMKPELVI.

6 helical membrane-spanning segments follow: residues 1-21 (PIAG…YGII), 34-54 (MFLP…LTCL), 63-85 (IAYS…TPWG), 89-111 (AMAL…NTTY), 128-148 (ILPM…AVPP), and 156-176 (LLIM…LGLS).

The protein belongs to the complex I subunit 4 family.

It localises to the mitochondrion membrane. It catalyses the reaction a ubiquinone + NADH + 5 H(+)(in) = a ubiquinol + NAD(+) + 4 H(+)(out). Its function is as follows. Core subunit of the mitochondrial membrane respiratory chain NADH dehydrogenase (Complex I) that is believed to belong to the minimal assembly required for catalysis. Complex I functions in the transfer of electrons from NADH to the respiratory chain. The immediate electron acceptor for the enzyme is believed to be ubiquinone. This Agkistrodon contortrix contortrix (Southern copperhead) protein is NADH-ubiquinone oxidoreductase chain 4 (MT-ND4).